The sequence spans 517 residues: Cytochrome P450 monooxygenase stcB (517 aa).

Residue Cys-461 participates in heme binding.

The protein belongs to the cytochrome P450 family. Requires heme as cofactor.

It functions in the pathway mycotoxin biosynthesis; sterigmatocystin biosynthesis. Functionally, cytochrome P450 monooxygenase; part of the gene cluster that mediates the biosynthesis of sterigmatocystin (ST), a polyketide-derived furanocoumarin which is part of the most toxic and carcinogenic compounds among the known mycotoxins. The first step in the biosynthesis of sterigmatocystin is the production of hexanoate by the fatty acid synthase (FAS) units stcJ and stcK. The polyketide backbone is assembled by the non-reducing polyketide synthase stcA by condensation of the starter hexanoyl-CoA and 7 malonyl-CoA extender units followed by cyclization and release of norsolorinic acid. Norsolorinic acid is the first stable intermediate in the biosynthesis of sterigmatocystin and is converted into averantin (AVN) by the ketoreductase stcE which reduces the hexanoate ketone to an alcohol. Averantin is then oxidized into 5'-hydroxyaverantin (HAVN) by the cytochrome P450 monooxygenase stcF. 5'-hydroxyaverantin is further converted to 5'-oxyaverantin (OAVN) by the 5'-hydroxyaverantin dehydrogenase stcG. The next step is the conversion of OAVN into averufin (AVF) which is catalyzed by a yet to be identified enzyme. The cytochrome P450 monooxygenase stcB and the flavin-binding monooxygenase stcW are both required for the conversion of averufin to 1-hydroxyversicolorone. The esterase stcI probably catalyzes the formation of versiconal hemiacetal acetate from 1-hydroxyversicolorone. The oxydoreductase stcN then probably catalyzes the biosynthetic step from versiconal to versicolorin B (VERB). The next step is performed by the versicolorin B desaturase stcL to produce versicolorin A (VERA). The ketoreductase stcU and the cytochrome P450 monooxygenase stcS are involved in the conversion of versicolorin A to demethylsterigmatocystin. The Baeyer-Villiger oxidas stcQ and the reductase stcR might be involved in the biosynthetic step from versicolorin A to demethylsterigmatocystin. The final step in the biosynthesis of sterigmatocystin is the methylation of demethylsterigmatocystin catalyzed by the methyltransferase stcP. This Emericella nidulans (strain FGSC A4 / ATCC 38163 / CBS 112.46 / NRRL 194 / M139) (Aspergillus nidulans) protein is Cytochrome P450 monooxygenase stcB.